The chain runs to 346 residues: Methylthioribose-1-phosphate isomerase (346 aa).

Residues 54-56 (RGA), arginine 91, and glutamine 192 each bind substrate. Aspartate 233 serves as the catalytic Proton donor. Substrate is bound at residue 243–244 (NK).

The protein belongs to the eIF-2B alpha/beta/delta subunits family. MtnA subfamily.

The enzyme catalyses 5-(methylsulfanyl)-alpha-D-ribose 1-phosphate = 5-(methylsulfanyl)-D-ribulose 1-phosphate. It functions in the pathway amino-acid biosynthesis; L-methionine biosynthesis via salvage pathway; L-methionine from S-methyl-5-thio-alpha-D-ribose 1-phosphate: step 1/6. Its function is as follows. Catalyzes the interconversion of methylthioribose-1-phosphate (MTR-1-P) into methylthioribulose-1-phosphate (MTRu-1-P). The polypeptide is Methylthioribose-1-phosphate isomerase (Yersinia pseudotuberculosis serotype IB (strain PB1/+)).